The following is a 354-amino-acid chain: 3-dehydroquinate synthase (354 aa).

Residues 100–104 (GATGD), 124–125 (TT), Lys-136, Lys-145, and 163–166 (FLKT) each bind NAD(+). Zn(2+) contacts are provided by Glu-178, His-242, and His-256.

It belongs to the sugar phosphate cyclases superfamily. Dehydroquinate synthase family. Co(2+) serves as cofactor. Requires Zn(2+) as cofactor. NAD(+) is required as a cofactor.

It localises to the cytoplasm. It carries out the reaction 7-phospho-2-dehydro-3-deoxy-D-arabino-heptonate = 3-dehydroquinate + phosphate. It functions in the pathway metabolic intermediate biosynthesis; chorismate biosynthesis; chorismate from D-erythrose 4-phosphate and phosphoenolpyruvate: step 2/7. In terms of biological role, catalyzes the conversion of 3-deoxy-D-arabino-heptulosonate 7-phosphate (DAHP) to dehydroquinate (DHQ). In Staphylococcus aureus (strain NCTC 8325 / PS 47), this protein is 3-dehydroquinate synthase.